Here is a 220-residue protein sequence, read N- to C-terminus: Tumor protein p53-inducible nuclear protein 2 (220 aa).

A compositionally biased stretch (low complexity) spans 1–12; that stretch reads MFQRLSSLFFST. 3 disordered regions span residues 1–24, 41–69, and 119–220; these read MFQR…CPRA, PDSY…LMDE, and PGSP…QFNY. Ser14 carries the phosphoserine modification. The LIR motif lies at 26 to 41; it reads VSEEDEVDGWLIIDLP. A compositionally biased stretch (pro residues) spans 47–64; sequence PPSPGAAPAPAGRPPPAP. Phosphoserine is present on Ser136. Positions 152-170 are enriched in low complexity; sequence HAAPLPARAALLEKAGQVR. Polar residues predominate over residues 205–220; the sequence is NQSSFIYQPCQRQFNY.

Interacts with VMP1, GABARAP, GABARAPL1, GABARAPL2, MAP1LC3A, MAP1LC3B, MAP1LC3C and THRA.

It is found in the cytoplasm. The protein localises to the cytosol. It localises to the nucleus. Its subcellular location is the PML body. The protein resides in the cytoplasmic vesicle. It is found in the autophagosome. Functionally, dual regulator of transcription and autophagy. Positively regulates autophagy and is required for autophagosome formation and processing. May act as a scaffold protein that recruits MAP1LC3A, GABARAP and GABARAPL2 and brings them to the autophagosome membrane by interacting with VMP1 where, in cooperation with the BECN1-PI3-kinase class III complex, they trigger autophagosome development. Acts as a transcriptional activator of THRA. The polypeptide is Tumor protein p53-inducible nuclear protein 2 (TP53INP2) (Homo sapiens (Human)).